Reading from the N-terminus, the 183-residue chain is Translation initiation factor IF-3 (183 aa).

This sequence belongs to the IF-3 family. Monomer.

It localises to the cytoplasm. In terms of biological role, IF-3 binds to the 30S ribosomal subunit and shifts the equilibrium between 70S ribosomes and their 50S and 30S subunits in favor of the free subunits, thus enhancing the availability of 30S subunits on which protein synthesis initiation begins. The chain is Translation initiation factor IF-3 from Pseudomonas putida (strain W619).